The chain runs to 246 residues: Allergin-1 (246 aa).

The first 33 residues, 1–33 (MGDGDSPMCLSAVSFKGIRCWLDKLLLWALTIS), serve as a signal peptide directing secretion. Residues 34-150 (ITLQNAAVDC…DESCPSCRLS (117 aa)) are Extracellular-facing. The Ig-like C2-type domain maps to 52 to 131 (PSPNLNSSMN…VNVSNLMKYS (80 aa)). N-linked (GlcNAc...) asparagine glycosylation occurs at Asn-68. A disulfide bridge connects residues Cys-73 and Cys-120. A helical transmembrane segment spans residues 151–171 (LLLPGLLLGILVIVLVLAYLI). Residues 172–246 (HLKYKKGKKT…ADYIYSELTH (75 aa)) lie on the Cytoplasmic side of the membrane. 2 short sequence motifs (ITIM motif) span residues 214 to 219 (IHYATP) and 239 to 244 (YIYSEL). Phosphotyrosine occurs at positions 216 and 241.

In terms of assembly, monomer. Interacts (tyrosine-phosphorylated) with PTPN6, PTPN11 and INPP5D. N-glycosylated. Expressed in myeloid cells (dendritic cells, macrophages and neutrophils but not in T-cells, B-cells or natural killer cells) and mast cells (at protein level).

It is found in the cell membrane. It localises to the secreted. In terms of biological role, immunoglobulin-like receptor which plays an inhibitory role in degranulation of mast cells. Negatively regulates IgE-mediated mast cell activation and suppresses the type I immediate hypersensitivity reaction. The chain is Allergin-1 (Milr1) from Mus musculus (Mouse).